A 633-amino-acid chain; its full sequence is DNA mismatch repair protein MutL (633 aa).

2 disordered regions span residues 337-364 (RPDD…GEFG) and 383-405 (VGWS…TRPE). Positions 385 to 396 (WSGGSSASGGSS) are enriched in gly residues.

The protein belongs to the DNA mismatch repair MutL/HexB family.

Its function is as follows. This protein is involved in the repair of mismatches in DNA. It is required for dam-dependent methyl-directed DNA mismatch repair. May act as a 'molecular matchmaker', a protein that promotes the formation of a stable complex between two or more DNA-binding proteins in an ATP-dependent manner without itself being part of a final effector complex. This is DNA mismatch repair protein MutL from Pseudomonas aeruginosa (strain UCBPP-PA14).